We begin with the raw amino-acid sequence, 513 residues long: DNA damage-binding protein CMR1 (513 aa).

Positions Arg35–Lys45 are enriched in basic and acidic residues. Positions Arg35–Glu103 are disordered. 6 WD repeats span residues Ile183–Glu224, Leu237–Leu277, Leu329–Asp369, Asn386–Leu425, Gly438–Leu477, and Glu478–Glu513.

The protein belongs to the WD repeat DDB2/WDR76 family.

Its function is as follows. DNA-binding protein that binds to both single- and double-stranded DNA. Binds preferentially to UV-damaged DNA. May be involved in DNA-metabolic processes. This Eremothecium gossypii (strain ATCC 10895 / CBS 109.51 / FGSC 9923 / NRRL Y-1056) (Yeast) protein is DNA damage-binding protein CMR1.